A 1329-amino-acid chain; its full sequence is Putative protein tag-53 (1329 aa).

The EGF-like 1 domain maps to 65-92; it reads SCDKPCYNGVCLNKACVCSKGWYGSQCD. Disulfide bonds link cysteine 66–cysteine 75, cysteine 70–cysteine 80, cysteine 82–cysteine 91, cysteine 94–cysteine 120, and cysteine 144–cysteine 166. The region spanning 94–203 is the CUB domain; that stretch reads CFGRIRISDN…NGFNVSYESN (110 aa). Asparagine 103 is a glycosylation site (N-linked (GlcNAc...) asparagine). 2 N-linked (GlcNAc...) asparagine glycosylation sites follow: asparagine 197 and asparagine 208. EGF-like domains are found at residues 204 to 232 and 235 to 270; these read RCAYNCSNHGSCLNGKCDCEDGYKGLNCE and VCQLSGKSTESPCHEGQCVDGRCECLSARVHGETCQ. 6 disulfides stabilise this stretch: cysteine 205-cysteine 215, cysteine 209-cysteine 220, cysteine 222-cysteine 231, cysteine 236-cysteine 252, cysteine 247-cysteine 257, and cysteine 259-cysteine 269. Kelch repeat units lie at residues 302-353, 355-408, 416-463, 471-518, 520-575, and 577-619; these read VVWS…KYKN, LYMF…VAGH, EMFV…AVEY, AILV…YLNG, MVVV…VIGQ, and LYAL…KCVF. Asparagine 324, asparagine 395, asparagine 447, asparagine 481, asparagine 529, and asparagine 555 each carry an N-linked (GlcNAc...) asparagine glycan. N-linked (GlcNAc...) asparagine glycosylation occurs at asparagine 820. N-linked (GlcNAc...) asparagine; atypical glycosylation occurs at asparagine 832. 2 N-linked (GlcNAc...) asparagine glycosylation sites follow: asparagine 833 and asparagine 934. Intrachain disulfides connect cysteine 945–cysteine 953, cysteine 947–cysteine 968, cysteine 971–cysteine 980, cysteine 983–cysteine 997, cysteine 1000–cysteine 1009, cysteine 1002–cysteine 1016, cysteine 1018–cysteine 1028, and cysteine 1031–cysteine 1045. Laminin EGF-like domains follow at residues 945–999 and 1000–1047; these read CQCN…VCSP and CDCH…PCFY. Residues 952-998 form the EGF-like 4 domain; that stretch reads TCFTSVGSFPPVTIEKCQSCQNHTTGAHCERCAPGFYGDARNGGVCS. N-linked (GlcNAc...) asparagine glycosylation is present at asparagine 973. N-linked (GlcNAc...) asparagine glycosylation is found at asparagine 1066, asparagine 1102, and asparagine 1147. The helical transmembrane segment at 1176 to 1196 threads the bilayer; the sequence is VLFFVIFAACFIVLLVVAGLL. The Cytoplasmic segment spans residues 1197-1329; that stretch reads WMIKVRIEAY…TIRQRPNNND (133 aa).

The protein resides in the membrane. The chain is Putative protein tag-53 (tag-53) from Caenorhabditis elegans.